The following is a 198-amino-acid chain: Transmembrane protein 17 (198 aa).

Asn13 and Asn23 each carry an N-linked (GlcNAc...) asparagine glycan. 4 helical membrane-spanning segments follow: residues 45–65, 78–98, 110–130, and 142–162; these read MSLY…IMML, FIVV…LYLG, LAGF…FLLF, and AVHI…FLTL.

This sequence belongs to the TMEM17 family. As to quaternary structure, part of the tectonic-like complex (also named B9 complex).

The protein resides in the cell projection. The protein localises to the cilium membrane. In terms of biological role, transmembrane component of the tectonic-like complex, a complex localized at the transition zone of primary cilia and acting as a barrier that prevents diffusion of transmembrane proteins between the cilia and plasma membranes. Required for ciliogenesis and sonic hedgehog/SHH signaling. This Bos taurus (Bovine) protein is Transmembrane protein 17 (TMEM17).